Here is a 486-residue protein sequence, read N- to C-terminus: MSTLMVQGTTSDAGKSTLVTALCRWLTRQGVKVVPFKPQNMALNSAVTADGGEIGRAQAVQAQACYLEPHTDMNPVLLKPNSDTGAQVIIHGRAVTTMNAVAYHGYKEIAMQAVLESHRRLGESYPVIVVEGAGSPAEINLRANDIANMGFAEAVDCPVLLIADINRGGVFAHLVGTLELLSLSEQARVKGFIINRFRGDIALLQPGLDWLEARTGKPVVGVLPYVMDLHLEAEDGLDQRQTDKVEHVLNVVVPVLPRISNHTDFDPLRLHPQVNLQFIGPGKAIPPADLIILPGSKSVRSDLNYLRNNGWDTAIARHLRYGGKLMGICGGLQMLGEQVHDPLGLEGAAGSSAGFGLLAMSTVLEAEKQLRNVRGRLTLEDAEVSGYEIHAGVTTGPALEQAAVQLDDGRCDGAQSADGQVLGTYLHGLFESPAACSALLRWAGLANVQSVDYHALRERDIERLADLVEKHLDGPLLRELCGLEAN.

One can recognise a GATase cobBQ-type domain in the interval 248–435 (VLNVVVPVLP…LHGLFESPAA (188 aa)). Cysteine 329 (nucleophile) is an active-site residue. The active site involves histidine 427.

The protein belongs to the CobB/CobQ family. CobQ subfamily.

Its pathway is cofactor biosynthesis; adenosylcobalamin biosynthesis. Functionally, catalyzes amidations at positions B, D, E, and G on adenosylcobyrinic A,C-diamide. NH(2) groups are provided by glutamine, and one molecule of ATP is hydrogenolyzed for each amidation. This Pseudomonas syringae pv. syringae (strain B728a) protein is Cobyric acid synthase.